Reading from the N-terminus, the 170-residue chain is MPSDVASRTGLPTPWTVRYSKSKKREYFFNPETKHSQWEEPEGTNKDQLHKHLRDHPVRVRCLHILIKHKDSRRPASHRSENITISKQDATDELKTLITRLDDDSKTNSFEALAKERSDCSSYKRGGDLGWFGRGEMQPSFEDAAFQLKVGEVSDIVESGSGVHVIKRVG.

Residues 9–43 (TGLPTPWTVRYSKSKKREYFFNPETKHSQWEEPEG) form the WW domain. Positions 30–53 (NPETKHSQWEEPEGTNKDQLHKHL) are disordered. Over residues 32–53 (ETKHSQWEEPEGTNKDQLHKHL) the composition is skewed to basic and acidic residues. A PpiC domain is found at 57–170 (PVRVRCLHIL…SGVHVIKRVG (114 aa)). Ser-161 is subject to Phosphoserine.

It belongs to the PpiC/parvulin rotamase family. In terms of assembly, interacts with the RNA polymerase II largest subunit (RPB1) and with the SIN1-RDP3 HDAC subunit SIN3.

It is found in the cytoplasm. It localises to the nucleus. The enzyme catalyses [protein]-peptidylproline (omega=180) = [protein]-peptidylproline (omega=0). Inhibited by 5-hydroxy-1,4-naphthoquinone (juglone), but not by FK506 or cyclosporin A. Functionally, essential PPIase specific for phosphoserine and phosphothreonine N-terminal to the proline residue. Required for efficient pre-mRNA 3'-end processing and transcription termination, probably by inducing conformational changes by proline-directed isomerization in the C-terminal domain (CTD) of RPB1, thereby altering cofactor binding with the RNA polymerase II transcription complex. Also targets the SIN3-RPD3 histone deacetylase complex (HDAC). The sequence is that of Peptidyl-prolyl cis-trans isomerase ESS1 (ESS1) from Saccharomyces cerevisiae (strain ATCC 204508 / S288c) (Baker's yeast).